The following is a 197-amino-acid chain: Holliday junction branch migration complex subunit RuvA (197 aa).

Residues 1–64 (MIGRLRGIVA…EDSVSLYGFL (64 aa)) are domain I. A domain II region spans residues 65-143 (REGERRLFRD…QFGAGGALPT (79 aa)). The tract at residues 144-153 (GSGPAPADPL) is flexible linker. The tract at residues 153 to 197 (LSDATVALQQLGYKPAEAARMARDAFNEGDEVATVIRKALQSALR) is domain III.

Belongs to the RuvA family. Homotetramer. Forms an RuvA(8)-RuvB(12)-Holliday junction (HJ) complex. HJ DNA is sandwiched between 2 RuvA tetramers; dsDNA enters through RuvA and exits via RuvB. An RuvB hexamer assembles on each DNA strand where it exits the tetramer. Each RuvB hexamer is contacted by two RuvA subunits (via domain III) on 2 adjacent RuvB subunits; this complex drives branch migration. In the full resolvosome a probable DNA-RuvA(4)-RuvB(12)-RuvC(2) complex forms which resolves the HJ.

The protein resides in the cytoplasm. Functionally, the RuvA-RuvB-RuvC complex processes Holliday junction (HJ) DNA during genetic recombination and DNA repair, while the RuvA-RuvB complex plays an important role in the rescue of blocked DNA replication forks via replication fork reversal (RFR). RuvA specifically binds to HJ cruciform DNA, conferring on it an open structure. The RuvB hexamer acts as an ATP-dependent pump, pulling dsDNA into and through the RuvAB complex. HJ branch migration allows RuvC to scan DNA until it finds its consensus sequence, where it cleaves and resolves the cruciform DNA. The polypeptide is Holliday junction branch migration complex subunit RuvA (Stenotrophomonas maltophilia (strain K279a)).